Reading from the N-terminus, the 684-residue chain is Putative glucan endo-1,3-beta-glucosidase btgC (684 aa).

Polar residues predominate over residues 1 to 10; the sequence is MAGVNRSFSY. Disordered stretches follow at residues 1-38, 124-143, and 157-182; these read MAGVNRSFSYSRGDDALLRDDEREISPLRSAEDGLYST, AERDFNTTGSDNPYIPAPPD, and DSYSSHTGLGAGAPFAEHSTPGTTPS. The Cytoplasmic portion of the chain corresponds to 1–302; it reads MAGVNRSFSY…HIIGGGSRKR (302 aa). Residues 12 to 32 show a composition bias toward basic and acidic residues; that stretch reads RGDDALLRDDEREISPLRSAE. The chain crosses the membrane as a helical; Signal-anchor for type II membrane protein span at residues 303–323; the sequence is GWIVGLILAAVIVAAIVGGAV. Over 324-684 the chain is Extracellular; it reads GGILGHQEHD…IPDCGGKTIT (361 aa). A disordered region spans residues 330-358; sequence QEHDGDTSSSSSSSSSSGTGSGGSDKGDG. Residues 336–347 are compositionally biased toward low complexity; the sequence is TSSSSSSSSSSG. 4 N-linked (GlcNAc...) asparagine glycosylation sites follow: asparagine 404, asparagine 427, asparagine 455, and asparagine 474. Glutamate 487 functions as the Proton donor in the catalytic mechanism. Glutamate 586 functions as the Nucleophile in the catalytic mechanism. Asparagine 631 carries N-linked (GlcNAc...) asparagine glycosylation.

The protein belongs to the glycosyl hydrolase 17 family.

The protein localises to the cell membrane. It carries out the reaction Hydrolysis of (1-&gt;3)-beta-D-glucosidic linkages in (1-&gt;3)-beta-D-glucans.. Its function is as follows. Glucanases play a role in cell expansion during growth, in cell-cell fusion during mating, and in spore release during sporulation. This enzyme may be involved in beta-glucan degradation. Active on laminarin and lichenan. This is Putative glucan endo-1,3-beta-glucosidase btgC (btgC) from Aspergillus niger (strain ATCC MYA-4892 / CBS 513.88 / FGSC A1513).